Consider the following 253-residue polypeptide: 5-oxoprolinase subunit A (253 aa).

It belongs to the LamB/PxpA family. Forms a complex composed of PxpA, PxpB and PxpC.

It carries out the reaction 5-oxo-L-proline + ATP + 2 H2O = L-glutamate + ADP + phosphate + H(+). Functionally, catalyzes the cleavage of 5-oxoproline to form L-glutamate coupled to the hydrolysis of ATP to ADP and inorganic phosphate. The polypeptide is 5-oxoprolinase subunit A (Azorhizobium caulinodans (strain ATCC 43989 / DSM 5975 / JCM 20966 / LMG 6465 / NBRC 14845 / NCIMB 13405 / ORS 571)).